A 262-amino-acid chain; its full sequence is Hydroxyethylthiazole kinase (262 aa).

Position 44 (Met-44) interacts with substrate. Residues Arg-118 and Ser-166 each coordinate ATP. A substrate-binding site is contributed by Gly-193.

It belongs to the Thz kinase family. The cofactor is Mg(2+).

The enzyme catalyses 5-(2-hydroxyethyl)-4-methylthiazole + ATP = 4-methyl-5-(2-phosphooxyethyl)-thiazole + ADP + H(+). The protein operates within cofactor biosynthesis; thiamine diphosphate biosynthesis; 4-methyl-5-(2-phosphoethyl)-thiazole from 5-(2-hydroxyethyl)-4-methylthiazole: step 1/1. Its function is as follows. Catalyzes the phosphorylation of the hydroxyl group of 4-methyl-5-beta-hydroxyethylthiazole (THZ). The chain is Hydroxyethylthiazole kinase from Chlamydia abortus (strain DSM 27085 / S26/3) (Chlamydophila abortus).